The sequence spans 3387 residues: Genome polyprotein (3387 aa).

At 1–100 (MNQRKKVVRP…LNILNGRKRS (100 aa)) the chain is on the cytoplasmic side. Residues 36–71 (LFSGKGPLRMVLAFITFLRVLSIPPTAGILKRWGQL) form a hydrophobic; homodimerization of capsid protein C region. A propeptide spans 100-113 (STITLLCLIPTVMA) (ER anchor for the capsid protein C, removed in mature form by serine protease NS3). Residues 101-117 (TITLLCLIPTVMAFSLS) form a helical membrane-spanning segment. The Extracellular segment spans residues 118–237 (TRDGEPLMIV…GAWKHAQRVE (120 aa)). The N-linked (GlcNAc...) asparagine; by host glycan is linked to Asn182. Residues 238–258 (SWILRNPGFALLAGFMAYMIG) traverse the membrane as a helical segment. At 259 to 265 (QTGIQRT) the chain is on the cytoplasmic side. Residues 266-279 (VFFVLMMLVAPSYG) form a helical membrane-spanning segment. Over 280–725 (MRCVGVGNRD…HQVFGSVYTT (446 aa)) the chain is Extracellular. 4 disulfides stabilise this stretch: Cys282/Cys309, Cys339/Cys400, Cys353/Cys384, and Cys371/Cys395. N-linked (GlcNAc...) asparagine; by host glycosylation is present at Asn346. Residues 377-390 (DRGWGNGCGLFGKG) are fusion peptide. Asn432 is a glycosylation site (N-linked (GlcNAc...) asparagine; by host). Disulfide bonds link Cys464-Cys564 and Cys581-Cys612. A helical membrane pass occupies residues 726–746 (MFGGVSWMIRILIGFLVLWIG). Topologically, residues 747-751 (TNSRN) are cytoplasmic. Residues 752–772 (TSMAMTCIAVGGITLFLGFTV) form a helical membrane-spanning segment. Topologically, residues 773–1194 (QADMGCVASW…MLGDTMSGRI (422 aa)) are extracellular. 6 disulfides stabilise this stretch: Cys778-Cys789, Cys829-Cys917, Cys953-Cys997, Cys1054-Cys1103, Cys1065-Cys1087, and Cys1086-Cys1090. N-linked (GlcNAc...) asparagine; by host glycans are attached at residues Asn904 and Asn981. The chain crosses the membrane as a helical span at residues 1195-1218 (GGQIHLAIMAVFKMSPGYVLGVFL). Over 1219–1224 (RKLTSR) the chain is Lumenal. The helical transmembrane segment at 1225–1243 (ETALMVIGMAMTTVLSIPH) threads the bilayer. Topologically, residues 1244–1267 (DLMELIDGISLGLILLKIVTQFDN) are cytoplasmic. Residues 1268–1288 (TQVGTLALSLTFIRSTMPLVM) form a helical membrane-spanning segment. Position 1289 (Ala1289) is a topological domain, lumenal. A helical membrane pass occupies residues 1290–1308 (WRTIMAVLFVVTLIPLCRT). The Lumenal portion of the chain corresponds to 1309 to 1316 (SCLQKQSH). A helical membrane pass occupies residues 1317 to 1337 (WVEITALILGAQALPVYLMTL). The Cytoplasmic segment spans residues 1338–1345 (MKGASRRS). The chain crosses the membrane as a helical span at residues 1346–1366 (WPLNEGIMAVGLVSLLGSALL). The Lumenal portion of the chain corresponds to 1367–1369 (KND). Residues 1370-1390 (VPLAGPMVAGGLLLAAYVMSG) form a helical membrane-spanning segment. Over 1391-1437 (SSADLSLEKAANVQWDEMADITGSSPIIEVKQDEDGSFSIRDVEETN) the chain is Cytoplasmic. The interval 1397–1436 (LEKAANVQWDEMADITGSSPIIEVKQDEDGSFSIRDVEET) is interacts with and activates NS3 protease. Positions 1438–1458 (MITLLVKLALITVSGLYPLAI) form an intramembrane region, helical. Residues 1459–2143 (PVTMTLWYMW…QHALNELPES (685 aa)) lie on the Cytoplasmic side of the membrane. Residues 1475-1652 (SGALWDVPSP…ERIGEPDYEV (178 aa)) enclose the Peptidase S7 domain. Active-site charge relay system; for serine protease NS3 activity residues include His1525, Asp1549, and Ser1609. One can recognise a Helicase ATP-binding domain in the interval 1654-1810 (EDIFRKKRLT…QSNSPIEDIE (157 aa)). The tract at residues 1658-1661 (RKKR) is important for RNA-binding. 1667 to 1674 (LHPGAGKT) is an ATP binding site. The DEAH box motif lies at 1758-1761 (DEAH). Residues 1820–1987 (TGFDWITDYQ…IIPTLFGPER (168 aa)) form the Helicase C-terminal domain. Lys1862 is subject to N6-acetyllysine; by host. The chain crosses the membrane as a helical span at residues 2144–2164 (LETLMLVALLGAMTAGIFLFF). Residues 2165 to 2169 (MQGKG) lie on the Lumenal side of the membrane. The helical intramembrane region spans 2170–2190 (IGKLSMGLITIAVASGLLWVA). A topological domain (lumenal) is located at residue Glu2191. Residues 2192-2212 (IQPQWIAASIILEFFLMVLLI) form a helical membrane-spanning segment. The Cytoplasmic portion of the chain corresponds to 2213–2225 (PEPEKQRTPQDNQ). The helical transmembrane segment at 2226–2246 (LIYVILTILTIIGLIAANEMG) threads the bilayer. Residues 2247–2270 (LIEKTKTDFGFYQVKTETTILDVD) are Lumenal-facing. The helical intramembrane region spans 2271 to 2291 (LRPASAWTLYAVATTILTPML). Residues 2292–2301 (RHTIENTSAN) lie on the Lumenal side of the membrane. Asn2297 and Asn2301 each carry an N-linked (GlcNAc...) asparagine; by host glycan. Positions 2302–2322 (LSLAAIANQAAVLMGLGKGWP) form an intramembrane region, helical. The Lumenal portion of the chain corresponds to 2323 to 2343 (LHRMDLGVPLLAMGCYSQVNP). Residues 2344–2364 (TTLTASLVMLLVHYAIIGPGL) form a helical membrane-spanning segment. At 2365 to 2409 (QAKATREAQKRTAAGIMKNPTVDGITVIDLEPISYDPKFEKQLGQ) the chain is on the cytoplasmic side. The helical transmembrane segment at 2410–2430 (VMLLVLCAGQLLLMRTTWAFC) threads the bilayer. Topologically, residues 2431 to 2455 (EVLTLATGPILTLWEGNPGRFWNTT) are lumenal. N-linked (GlcNAc...) asparagine; by host glycosylation is present at Asn2453. A helical transmembrane segment spans residues 2456–2476 (IAVSTANIFRGSYLAGAGLAF). The Cytoplasmic portion of the chain corresponds to 2477–3387 (SLIKNAQTPR…SAPSESEGVL (911 aa)). Residues 2489 to 2751 (TGTTGETLGE…DVDLGAGTRS (263 aa)) enclose the mRNA cap 0-1 NS5-type MT domain. Ser2543 lines the S-adenosyl-L-methionine pocket. Ser2543 is subject to Phosphoserine. Lys2548 functions as the For 2'-O-MTase activity in the catalytic mechanism. The short motif at 2564 to 2567 (VVDL) is the SUMO-interacting motif element. S-adenosyl-L-methionine contacts are provided by Gly2573, Trp2574, Thr2591, Lys2592, Asp2618, and Val2619. The For 2'-O-MTase activity role is filled by Asp2633. Ile2634 serves as a coordination point for S-adenosyl-L-methionine. Catalysis depends on for 2'-O-MTase activity residues Lys2668 and Glu2704. Tyr2706 contributes to the S-adenosyl-L-methionine binding site. 4 residues coordinate Zn(2+): Glu2925, His2929, Cys2934, and Cys2937. In terms of domain architecture, RdRp catalytic spans 3016–3166 (LMYADDTAGW…PLDERFGTSL (151 aa)). His3200, Cys3216, and Cys3335 together coordinate Zn(2+).

This sequence in the N-terminal section; belongs to the class I-like SAM-binding methyltransferase superfamily. mRNA cap 0-1 NS5-type methyltransferase family. Homodimer. Interacts (via N-terminus) with host EXOC1 (via C-terminus); this interaction results in EXOC1 degradation through the proteasome degradation pathway. As to quaternary structure, forms heterodimers with envelope protein E in the endoplasmic reticulum and Golgi. In terms of assembly, homodimer; in the endoplasmic reticulum and Golgi. Interacts with protein prM. Interacts with non-structural protein 1. Homodimer; Homohexamer when secreted. Interacts with envelope protein E. As to quaternary structure, interacts (via N-terminus) with serine protease NS3. In terms of assembly, forms a heterodimer with serine protease NS3. May form homooligomers. Forms a heterodimer with NS2B. Interacts with NS4B. Interacts with unphosphorylated RNA-directed RNA polymerase NS5; this interaction stimulates RNA-directed RNA polymerase NS5 guanylyltransferase activity. Interacts with host SHFL. As to quaternary structure, interacts with host MAVS; this interaction inhibits the synthesis of IFN-beta. Interacts with host SHFL. Interacts with host AUP1; the interaction occurs in the presence of Dengue virus NS4B and induces lipophagy which facilitates production of virus progeny particles. In terms of assembly, interacts with serine protease NS3. Homodimer. Interacts with host STAT2; this interaction inhibits the phosphorylation of the latter, and, when all viral proteins are present (polyprotein), targets STAT2 for degradation. Interacts with serine protease NS3. Interacts with host PAF1 complex; the interaction may prevent the recruitment of the PAF1 complex to interferon-responsive genes, and thus reduces the immune response. Specific enzymatic cleavages in vivo yield mature proteins. Cleavages in the lumen of endoplasmic reticulum are performed by host signal peptidase, whereas cleavages in the cytoplasmic side are performed by serine protease NS3. Signal cleavage at the 2K-4B site requires a prior NS3 protease-mediated cleavage at the 4A-2K site. In terms of processing, cleaved in post-Golgi vesicles by a host furin, releasing the mature small envelope protein M, and peptide pr. This cleavage is incomplete as up to 30% of viral particles still carry uncleaved prM. Post-translationally, N-glycosylated. N-glycosylated. The excreted form is glycosylated and this is required for efficient secretion of the protein from infected cells. In terms of processing, acetylated by host KAT5. Acetylation modulates NS3 RNA-binding and unwinding activities and plays an important positive role for viral replication. Post-translationally, sumoylation of RNA-directed RNA polymerase NS5 increases NS5 protein stability allowing proper viral RNA replication. Phosphorylated on serines residues. This phosphorylation may trigger NS5 nuclear localization.

It localises to the virion. The protein resides in the host nucleus. The protein localises to the host cytoplasm. Its subcellular location is the host perinuclear region. It is found in the secreted. It localises to the virion membrane. The protein resides in the host endoplasmic reticulum membrane. The protein localises to the host mitochondrion. The enzyme catalyses Selective hydrolysis of -Xaa-Xaa-|-Yaa- bonds in which each of the Xaa can be either Arg or Lys and Yaa can be either Ser or Ala.. It carries out the reaction RNA(n) + a ribonucleoside 5'-triphosphate = RNA(n+1) + diphosphate. The catalysed reaction is a ribonucleoside 5'-triphosphate + H2O = a ribonucleoside 5'-diphosphate + phosphate + H(+). It catalyses the reaction ATP + H2O = ADP + phosphate + H(+). The enzyme catalyses a 5'-end (5'-triphosphoguanosine)-ribonucleoside in mRNA + S-adenosyl-L-methionine = a 5'-end (N(7)-methyl 5'-triphosphoguanosine)-ribonucleoside in mRNA + S-adenosyl-L-homocysteine. It carries out the reaction a 5'-end (N(7)-methyl 5'-triphosphoguanosine)-ribonucleoside in mRNA + S-adenosyl-L-methionine = a 5'-end (N(7)-methyl 5'-triphosphoguanosine)-(2'-O-methyl-ribonucleoside) in mRNA + S-adenosyl-L-homocysteine + H(+). In terms of biological role, plays a role in virus budding by binding to the cell membrane and gathering the viral RNA into a nucleocapsid that forms the core of a mature virus particle. During virus entry, may induce genome penetration into the host cytoplasm after hemifusion induced by the surface proteins. Can migrate to the cell nucleus where it modulates host functions. Overcomes the anti-viral effects of host EXOC1 by sequestering and degrading the latter through the proteasome degradation pathway. Regulates the ATPase activity of the NS3 helicase activity. NS4A allows NS3 helicase to conserve energy during unwinding. Plays a role in the inhibition of the host innate immune response. Interacts with host MAVS and thereby prevents the interaction between RIGI and MAVS. In turn, IFN-beta production is impaired. Interacts with host AUP1 which mediates induction of lipophagy in host cells and facilitates production of virus progeny particles. Functionally, inhibits RNA silencing by interfering with host Dicer. Its function is as follows. Prevents premature fusion activity of envelope proteins in trans-Golgi by binding to envelope protein E at pH6.0. After virion release in extracellular space, gets dissociated from E dimers. In terms of biological role, acts as a chaperone for envelope protein E during intracellular virion assembly by masking and inactivating envelope protein E fusion peptide. prM is the only viral peptide matured by host furin in the trans-Golgi network probably to avoid catastrophic activation of the viral fusion activity in acidic Golgi compartment prior to virion release. prM-E cleavage is inefficient, and many virions are only partially matured. These uncleaved prM would play a role in immune evasion. May play a role in virus budding. Exerts cytotoxic effects by activating a mitochondrial apoptotic pathway through M ectodomain. May display a viroporin activity. Functionally, binds to host cell surface receptor and mediates fusion between viral and cellular membranes. Envelope protein is synthesized in the endoplasmic reticulum in the form of heterodimer with protein prM. They play a role in virion budding in the ER, and the newly formed immature particle is covered with 60 spikes composed of heterodimer between precursor prM and envelope protein E. The virion is transported to the Golgi apparatus where the low pH causes dissociation of PrM-E heterodimers and formation of E homodimers. prM-E cleavage is inefficient, and many virions are only partially matured. These uncleaved prM would play a role in immune evasion. Its function is as follows. Involved in immune evasion, pathogenesis and viral replication. Once cleaved off the polyprotein, is targeted to three destinations: the viral replication cycle, the plasma membrane and the extracellular compartment. Essential for viral replication. Required for formation of the replication complex and recruitment of other non-structural proteins to the ER-derived membrane structures. Excreted as a hexameric lipoparticle that plays a role against host immune response. Antagonizing the complement function. Binds to the host macrophages and dendritic cells. Inhibits signal transduction originating from Toll-like receptor 3 (TLR3). In terms of biological role, disrupts the host endothelial glycocalyx layer of host pulmonary microvascular endothelial cells, inducing degradation of sialic acid and shedding of heparan sulfate proteoglycans. NS1 induces expression of sialidases, heparanase, and activates cathepsin L, which activates heparanase via enzymatic cleavage. These effects are probably linked to the endothelial hyperpermeability observed in severe dengue disease. Component of the viral RNA replication complex that functions in virion assembly and antagonizes the host immune response. Functionally, required cofactor for the serine protease function of NS3. May have membrane-destabilizing activity and form viroporins. Its function is as follows. Displays three enzymatic activities: serine protease, NTPase and RNA helicase. NS3 serine protease, in association with NS2B, performs its autocleavage and cleaves the polyprotein at dibasic sites in the cytoplasm: C-prM, NS2A-NS2B, NS2B-NS3, NS3-NS4A, NS4A-2K and NS4B-NS5. NS3 RNA helicase binds RNA and unwinds dsRNA in the 3' to 5' direction. In terms of biological role, functions as a signal peptide for NS4B and is required for the interferon antagonism activity of the latter. Induces the formation of ER-derived membrane vesicles where the viral replication takes place. Inhibits interferon (IFN)-induced host STAT1 phosphorylation and nuclear translocation, thereby preventing the establishment of cellular antiviral state by blocking the IFN-alpha/beta pathway. Functionally, replicates the viral (+) and (-) RNA genome, and performs the capping of genomes in the cytoplasm. NS5 methylates viral RNA cap at guanine N-7 and ribose 2'-O positions. Besides its role in RNA genome replication, also prevents the establishment of cellular antiviral state by blocking the interferon-alpha/beta (IFN-alpha/beta) signaling pathway. Inhibits host TYK2 and STAT2 phosphorylation, thereby preventing activation of JAK-STAT signaling pathway. May reduce immune responses by preventing the recruitment of the host PAF1 complex to interferon-responsive genes. The polypeptide is Genome polyprotein (Dengue virus type 4 (strain Dominica/814669/1981) (DENV-4)).